We begin with the raw amino-acid sequence, 507 residues long: Probable cytosol aminopeptidase (507 aa).

Mn(2+) is bound by residues Lys-275 and Asp-280. The active site involves Lys-287. Positions 298, 357, and 359 each coordinate Mn(2+). The active site involves Arg-361.

It belongs to the peptidase M17 family. Mn(2+) serves as cofactor.

The protein localises to the cytoplasm. The enzyme catalyses Release of an N-terminal amino acid, Xaa-|-Yaa-, in which Xaa is preferably Leu, but may be other amino acids including Pro although not Arg or Lys, and Yaa may be Pro. Amino acid amides and methyl esters are also readily hydrolyzed, but rates on arylamides are exceedingly low.. It carries out the reaction Release of an N-terminal amino acid, preferentially leucine, but not glutamic or aspartic acids.. Presumably involved in the processing and regular turnover of intracellular proteins. Catalyzes the removal of unsubstituted N-terminal amino acids from various peptides. The protein is Probable cytosol aminopeptidase of Rhodopirellula baltica (strain DSM 10527 / NCIMB 13988 / SH1).